The primary structure comprises 702 residues: Epsin-1 (702 aa).

Positions 10 to 142 (NFSKGYTDTQ…EDEHALKEAR (133 aa)) constitute an ENTH domain. Composition is skewed to basic and acidic residues over residues 136-160 (HALK…SSRF) and 183-192 (SRYDDDDRDH). The tract at residues 136-285 (HALKEARGDS…HQREREQQEQ (150 aa)) is disordered. The span at 193–214 (RSRRRSRSRRPGRSRSRRRSRR) shows a compositional bias: basic residues. Phosphoserine is present on residues Ser-212, Ser-216, Ser-218, and Ser-223. UIM domains are found at residues 226 to 245 (ENDP…AEED) and 254 to 273 (DSEA…DEAR). Positions 230–248 (ELQRVIEESKRQAEEDAKR) are enriched in basic and acidic residues. At Ser-255 the chain carries Phosphoserine. Residues 266–283 (SKEEDEARQRHQREREQQ) are compositionally biased toward basic and acidic residues. Thr-406 is subject to Phosphothreonine. Disordered stretches follow at residues 504–589 (NHTG…RTGD) and 683–702 (PMQG…LIDL). The span at 514–534 (TGLQRQTTGYTGNNNPYSRPL) shows a compositional bias: polar residues. The segment covering 535–549 (QSQSTGILQQQQQQS) has biased composition (low complexity). Polar residues predominate over residues 557–577 (KTGSNNPFAQFSNLPSQSTAP). A compositionally biased stretch (low complexity) spans 683 to 695 (PMQGMQQQSMQPQ).

It belongs to the epsin family.

The protein resides in the cytoplasm. The protein localises to the membrane. Its function is as follows. Binds to membranes enriched in phosphatidylinositol 3,5-bisphosphate (PtdIns(3,5)P2) and phosphatidylinositol 4,5-bisphosphate (PtdIns(4,5)P2). Required for endocytosis and localization of actin. This chain is Epsin-1 (ent1), found in Schizosaccharomyces pombe (strain 972 / ATCC 24843) (Fission yeast).